A 944-amino-acid chain; its full sequence is Breast cancer type 2 susceptibility protein homolog (944 aa).

2 stretches are compositionally biased toward basic and acidic residues: residues K325–I348 and N415–N431. 2 disordered regions span residues K325–D354 and N415–Q440. BRCA2 repeat units follow at residues A543–S577, N644–A678, and S719–A753. 2 disordered regions span residues L823–A854 and S876–Y944. Composition is skewed to polar residues over residues I838–D852 and S876–A885. The span at A904–A921 shows a compositional bias: basic and acidic residues. A compositionally biased stretch (basic residues) spans K932 to Y944.

As to quaternary structure, interacts with Rad9 and spn-A/Rad51.

The protein localises to the nucleus. In terms of biological role, involved in and required for double-strand break repair by meiotic and mitotic homologous recombination. During meiosis, has a dual role in the repair of meiotic double-stranded breaks and the efficient activation of the meiotic recombination checkpoint. The chain is Breast cancer type 2 susceptibility protein homolog from Drosophila simulans (Fruit fly).